Consider the following 835-residue polypeptide: Ribosome-releasing factor 2, mitochondrial (835 aa).

A mitochondrion-targeting transit peptide spans 1-50 (MPWCNTRLRTCGASPKIFLRRVRCPVLLHNWTIGRVSSVSKMILRFLRSY). The tr-type G domain maps to 57 to 343 (TRVRNIGIIA…AVVDYLPSPA (287 aa)). GTP contacts are provided by residues 66–73 (AHIDAGKT), 131–135 (DTPGH), and 183–186 (NKMD).

This sequence belongs to the TRAFAC class translation factor GTPase superfamily. Classic translation factor GTPase family. EF-G/EF-2 subfamily.

It is found in the mitochondrion. In terms of biological role, mitochondrial GTPase that mediates the disassembly of ribosomes from messenger RNA at the termination of mitochondrial protein biosynthesis. Not involved in the GTP-dependent ribosomal translocation step during translation elongation. The sequence is that of Ribosome-releasing factor 2, mitochondrial from Eremothecium gossypii (strain ATCC 10895 / CBS 109.51 / FGSC 9923 / NRRL Y-1056) (Yeast).